A 114-amino-acid polypeptide reads, in one-letter code: Putative movement protein (114 aa).

Residues 27 to 47 (LIGIILLVTVCLIVLWVCIML) traverse the membrane as a helical segment. Residues 79-114 (RTPFEATGPERERNWDARRQSTTVNPASQPNTGSVF) are disordered. Over residues 86–97 (GPERERNWDARR) the composition is skewed to basic and acidic residues. The span at 98–114 (QSTTVNPASQPNTGSVF) shows a compositional bias: polar residues.

It belongs to the nanovirus movement protein family.

It is found in the host cell membrane. Functionally, may transport viral genome to neighboring plant cells directly through plasmosdesmata, without any budding. The movement protein allows efficient cell to cell propagation, by bypassing the host cell wall barrier. The polypeptide is Putative movement protein (DNA-M) (Faba bean necrotic yellows virus (isolate Syrian SV292-88) (FBNYV)).